The sequence spans 588 residues: Adenine deaminase (588 aa).

It belongs to the metallo-dependent hydrolases superfamily. Adenine deaminase family. In terms of assembly, homodimer. Mn(2+) serves as cofactor.

The enzyme catalyses adenine + H2O + H(+) = hypoxanthine + NH4(+). The chain is Adenine deaminase from Escherichia coli O157:H7 (strain EC4115 / EHEC).